The following is a 171-amino-acid chain: PIDD1 alternative open reading frame protein (171 aa).

Disordered stretches follow at residues 1-22 (MSGLQGPSVGDGCNGGGARAGG) and 76-156 (ILAS…LCPA). Residues 84–99 (GPSAAGGHPGPAASEP) are compositionally biased toward low complexity.

In terms of assembly, interacts with calpain-2 catalytic subunit CAPN2. In terms of processing, cleaved in vitro following UV irradiation to induce caspase-mediated apoptosis and this cleavage is inhibited by a broad-spectrum caspase inhibitor.

It is found in the cytoplasm. The protein localises to the cytoskeleton. The chain is PIDD1 alternative open reading frame protein from Homo sapiens (Human).